Consider the following 475-residue polypeptide: Arginine/ornithine antiporter (475 aa).

12 helical membrane passes run 10–30, 42–62, 74–94, 101–121, 157–177, 205–225, 238–258, 283–303, 333–353, 361–381, 397–417, and 451–471; these read IGLLALIALVISSSIGSGVFG, GPVLIAWVIVGFGILMLALSL, GIFSYAEKGFGPFAGFISGWG, LGNVTFATILMSALGYFFPIF, LVTICKLIPLFVFIIFGIVLF, NCMMVMMWVFVGIEGASMLSA, ILGLVSLLAIYILASVLPYGY, WGGYFIGVGLIISILGAWLSW, PTFALVVTAGLIQVFLFTLLF, AYSLCTASIIVCYMLVAAYQI, LLIGVLALLFEIAGILMAGVS, and WLITTIIVIGAIIGIWLVVSG.

Belongs to the amino acid-polyamine-organocation (APC) superfamily. Basic amino acid/polyamine antiporter (APA) (TC 2.A.3.2) family.

It is found in the cell membrane. The enzyme catalyses L-ornithine(in) + L-arginine(out) = L-ornithine(out) + L-arginine(in). Its function is as follows. Catalyzes electroneutral exchange between L-arginine and L-ornithine. This chain is Arginine/ornithine antiporter (arcD), found in Latilactobacillus sakei (Lactobacillus sakei).